A 332-amino-acid polypeptide reads, in one-letter code: NADH-quinone oxidoreductase subunit H (332 aa).

Helical transmembrane passes span 4–24 (FAFF…IFAS), 44–64 (IGPD…MIKL), 78–98 (FIFA…LAAI), 120–140 (VALL…FLGG), 165–185 (VGAL…LVDI), 194–214 (FSWL…ALFI), 255–275 (IAGA…FWII), 279–299 (IMMI…RAAF), and 312–332 (YLIL…AVLL).

Belongs to the complex I subunit 1 family. In terms of assembly, NDH-1 is composed of 14 different subunits. Subunits NuoA, H, J, K, L, M, N constitute the membrane sector of the complex.

It is found in the cell inner membrane. The catalysed reaction is a quinone + NADH + 5 H(+)(in) = a quinol + NAD(+) + 4 H(+)(out). In terms of biological role, NDH-1 shuttles electrons from NADH, via FMN and iron-sulfur (Fe-S) centers, to quinones in the respiratory chain. The immediate electron acceptor for the enzyme in this species is believed to be ubiquinone. Couples the redox reaction to proton translocation (for every two electrons transferred, four hydrogen ions are translocated across the cytoplasmic membrane), and thus conserves the redox energy in a proton gradient. This subunit may bind ubiquinone. This chain is NADH-quinone oxidoreductase subunit H, found in Campylobacter jejuni (strain RM1221).